A 419-amino-acid chain; its full sequence is Homeobox-containing protein 1 (419 aa).

The 32-residue stretch at 18-49 (DEPRFTIEQIDLLQRLRRTGMTKHEILHALET) folds into the HNF-p1 domain. The segment at 56 to 152 (EHSDKFGRRS…GQRSYSFEAS (97 aa)) is disordered. Residue Lys60 forms a Glycyl lysine isopeptide (Lys-Gly) (interchain with G-Cter in SUMO2) linkage. 2 stretches are compositionally biased toward low complexity: residues 64 to 73 (RSSYGGSSYG) and 81 to 93 (ASSS…TQTQ). Positions 94–132 (HSGMSPSPSNSYDTSPLPCTTNQNGRENNDRLSTSNGKM) are enriched in polar residues. Lys131 participates in a covalent cross-link: Glycyl lysine isopeptide (Lys-Gly) (interchain with G-Cter in SUMO2). Residues 145-241 (RSYSFEASEE…PGATLSMRPA (97 aa)) form the POU-specific atypical domain. The residue at position 148 (Ser148) is a Phosphoserine. Lys161 participates in a covalent cross-link: Glycyl lysine isopeptide (Lys-Gly) (interchain with G-Cter in SUMO2). Ser170 is subject to Phosphoserine. Glycyl lysine isopeptide (Lys-Gly) (interchain with G-Cter in SUMO2) cross-links involve residues Lys174, Lys217, and Lys310. A DNA-binding region (homeobox) is located at residues 267 to 341 (RRGSRFTWRK…NRRKEIKRRA (75 aa)). A disordered region spans residues 352–384 (IDVQSPGGHSNSDDVDGNDYSEQDDSTSHSDHQ). Residues 364-376 (DDVDGNDYSEQDD) show a composition bias toward acidic residues. A Glycyl lysine isopeptide (Lys-Gly) (interchain with G-Cter in SUMO1); alternate cross-link involves residue Lys412. A Glycyl lysine isopeptide (Lys-Gly) (interchain with G-Cter in SUMO2); alternate cross-link involves residue Lys412.

As to quaternary structure, associates with the telomerase holoenzyme complex. Interacts with DKC1, XRCC6 and COIL.

It is found in the nucleus. It localises to the cytoplasm. The protein resides in the chromosome. Its subcellular location is the telomere. The protein localises to the cajal body. It is found in the PML body. Its function is as follows. Binds directly to 5'-TTAGGG-3' repeats in telomeric DNA. Associates with the telomerase complex at sites of active telomere processing and positively regulates telomere elongation. Important for TERT binding to chromatin, indicating a role in recruitment of the telomerase complex to telomeres. Also plays a role in the alternative lengthening of telomeres (ALT) pathway in telomerase-negative cells where it promotes formation and/or maintenance of ALT-associated promyelocytic leukemia bodies (APBs). Enhances formation of telomere C-circles in ALT cells, suggesting a possible role in telomere recombination. Might also be involved in the DNA damage response at telomeres. The protein is Homeobox-containing protein 1 (Hmbox1) of Mus musculus (Mouse).